A 355-amino-acid polypeptide reads, in one-letter code: CX3C chemokine receptor 1 (355 aa).

Topologically, residues 1 to 31 (MDQFPESVTENFEYDDLAEACYIGDIVVFGT) are extracellular. The helical transmembrane segment at 32 to 59 (VFLSIFYSVIFAIGLVGNLLVVFALTNS) threads the bilayer. The Cytoplasmic portion of the chain corresponds to 60-69 (KKPKSVTDIY). Residues 70-90 (LLNLALSDLLFVATLPFWTHY) traverse the membrane as a helical segment. Residues 91–103 (LINEKGLHNAMCK) are Extracellular-facing. A disulfide bridge links C102 with C175. A helical transmembrane segment spans residues 104–125 (FTTAFFFIGFFGSIFFITVISI). At 126–142 (DRYLAIVLAANSMNNRT) the chain is on the cytoplasmic side. A helical membrane pass occupies residues 143–167 (VQHGVTISLGVWAAAILVAAPQFMF). Residues 168-195 (TKQKENECLGDYPEVLQEIWPVLRNVET) lie on the Extracellular side of the membrane. The chain crosses the membrane as a helical span at residues 196–215 (NFLGFLLPLLIMSYCYFRII). Residues 216-231 (QTLFSCKNHKKAKAIK) are Cytoplasmic-facing. The helical transmembrane segment at 232 to 256 (LILLVVIVFFLFWTPYNVMIFLETL) threads the bilayer. Topologically, residues 257–273 (KLYDFFPSCDMRKDLRL) are extracellular. A helical membrane pass occupies residues 274-297 (ALSVTETVAFSHCCLNPLIYAFAG). Topologically, residues 298–355 (EKFRRYLYHLYGKCLAVLCGRSVHVDFSSSESQRSRHGSVLSSNFTYHTSDGDALLLL) are cytoplasmic. Residue T346 is modified to Phosphothreonine.

Belongs to the G-protein coupled receptor 1 family. Found in a ternary complex with CX3CL1 and ITGAV:ITGB3 or ITGA4:ITGB1. As to quaternary structure, (Microbial infection) Interacts with human respiratory syncytial virus (HRSV) protein G; this interaction modulates host immune response. In terms of assembly, (Microbial infection) Interacts with HIV-1 envelope polyprotein gp160. Post-translationally, this protein is not N-glycosylated which is unusual for G-protein-coupled receptors. As to expression, expressed in lymphoid and neural tissues. Expressed in lymphocyte subsets, such as natural killer (NK) cells, gamma-delta T-cells and terminally differentiated CD8(+) T-cells. Expressed in smooth muscle cells in atherosclerotic plaques.

The protein resides in the cell membrane. Receptor for the C-X3-C chemokine fractalkine (CX3CL1) present on many early leukocyte cells; CX3CR1-CX3CL1 signaling exerts distinct functions in different tissue compartments, such as immune response, inflammation, cell adhesion and chemotaxis. CX3CR1-CX3CL1 signaling mediates cell migratory functions. Responsible for the recruitment of natural killer (NK) cells to inflamed tissues. Acts as a regulator of inflammation process leading to atherogenesis by mediating macrophage and monocyte recruitment to inflamed atherosclerotic plaques, promoting cell survival. Involved in airway inflammation by promoting interleukin 2-producing T helper (Th2) cell survival in inflamed lung. Involved in the migration of circulating monocytes to non-inflamed tissues, where they differentiate into macrophages and dendritic cells. Acts as a negative regulator of angiogenesis, probably by promoting macrophage chemotaxis. Plays a key role in brain microglia by regulating inflammatory response in the central nervous system (CNS) and regulating synapse maturation. Required to restrain the microglial inflammatory response in the CNS and the resulting parenchymal damage in response to pathological stimuli. Involved in brain development by participating in synaptic pruning, a natural process during which brain microglia eliminates extra synapses during postnatal development. Synaptic pruning by microglia is required to promote the maturation of circuit connectivity during brain development. Acts as an important regulator of the gut microbiota by controlling immunity to intestinal bacteria and fungi. Expressed in lamina propria dendritic cells in the small intestine, which form transepithelial dendrites capable of taking up bacteria in order to provide defense against pathogenic bacteria. Required to initiate innate and adaptive immune responses against dissemination of commensal fungi (mycobiota) component of the gut: expressed in mononuclear phagocytes (MNPs) and acts by promoting induction of antifungal IgG antibodies response to confer protection against disseminated C.albicans or C.auris infection. Also acts as a receptor for C-C motif chemokine CCL26, inducing cell chemotaxis. Its function is as follows. (Microbial infection) Acts as a coreceptor with CD4 for HIV-1 virus envelope protein. In terms of biological role, (Microbial infection) Acts as a coreceptor with CD4 for HIV-1 virus envelope protein. May have more potent HIV-1 coreceptothr activity than isoform 1. Functionally, (Microbial infection) Acts as a coreceptor with CD4 for HIV-1 virus envelope protein. May have more potent HIV-1 coreceptor activity than isoform 1. This Homo sapiens (Human) protein is CX3C chemokine receptor 1.